The sequence spans 568 residues: Protein yellow (568 aa).

The first 28 residues, 1–28 (MHAQDKGGILPALSLLLIAVAMVSPSQA), serve as a signal peptide directing secretion. Residues Asn-151 and Asn-222 are each glycosylated (N-linked (GlcNAc...) asparagine).

This sequence belongs to the major royal jelly protein family.

Its subcellular location is the secreted. In terms of biological role, controls the pigmentation pattern of the adult cuticle and larval mouth parts. The chain is Protein yellow (y) from Drosophila madeirensis (Fruit fly).